Here is a 769-residue protein sequence, read N- to C-terminus: Dolichyl-phosphate-mannose--protein mannosyltransferase 2 (769 aa).

The interval 1–44 (MSTSVEPNETEALLRKQNDLSTTASIEEKYPHQQGEAAEDDDDT) is disordered. An N-linked (GlcNAc...) asparagine glycan is attached at Asn8. Residues 59 to 79 (SLKQVESILAPIVFTALSFFV) traverse the membrane as a helical segment. Asn132 carries N-linked (GlcNAc...) asparagine glycosylation. A run of 3 helical transmembrane segments spans residues 152–169 (MRLFNATFSALCVPLAYF), 176–194 (FSMFTTWLFTLMVALESSY), and 200–218 (FILLDSMLLFFTVATVFCF). The N-linked (GlcNAc...) asparagine glycan is linked to Asn226. 2 helical membrane-spanning segments follow: residues 252–272 (VKMVGLFVTTLVGIYTVVDLW) and 288–308 (HWFARIVALILVPIFIFMLSF). The N-linked (GlcNAc...) asparagine glycan is linked to Asn324. An MIR 1 domain is found at 342-397 (PREVSMFHSVITLKNQGLSGGLLHSHVQTFPEGSKQQQVTTYGHKDSNNNWIFQRA). N-linked (GlcNAc...) asparagine glycosylation is found at Asn408, Asn453, and Asn462. 2 MIR domains span residues 412–468 (IEYI…VEIM) and 474–534 (EDKM…IENN). Transmembrane regions (helical) follow at residues 615–635 (TTWTSTVGVILFAFIVLYYLI), 655–675 (FLMGGIYPMFGWGLHFLPFAI), 679–699 (VTYVHHYVPALYFAMLVFCYE), and 718–738 (LLYLAIYIGLLSLVAGTFWYF).

The protein belongs to the glycosyltransferase 39 family. In terms of assembly, PMT1 and PMT2 form a functional heterodimer.

It localises to the endoplasmic reticulum membrane. It carries out the reaction a di-trans,poly-cis-dolichyl beta-D-mannosyl phosphate + L-seryl-[protein] = 3-O-(alpha-D-mannosyl)-L-seryl-[protein] + a di-trans,poly-cis-dolichyl phosphate + H(+). It catalyses the reaction a di-trans,poly-cis-dolichyl beta-D-mannosyl phosphate + L-threonyl-[protein] = 3-O-(alpha-D-mannosyl)-L-threonyl-[protein] + a di-trans,poly-cis-dolichyl phosphate + H(+). Its pathway is protein modification; protein glycosylation. Protein mannosyltransferase (PMT) involved in hyphal growth and drug sensitivity. Transfers mannose from Dol-P-mannose to Ser or Thr residues on proteins. PMT1, PMT2 and PMT4 account for most of the protein-O-glycosylation activity, while PMT5 and PMT6 may specifically modulate a much narrower spectrum of target proteins. Essential protein that plays an important role in virulence. This Candida albicans (strain SC5314 / ATCC MYA-2876) (Yeast) protein is Dolichyl-phosphate-mannose--protein mannosyltransferase 2.